The primary structure comprises 272 residues: Probable glutathione S-transferase DHAR2, chloroplastic (272 aa).

A chloroplast-targeting transit peptide spans 1–57 (MAVLLRTTTSATTATSGGSSSATALLATTFRRGGRRLLLLPATRGSAPRRAALLTAR). Residues Lys68 and Asp79 each coordinate glutathione. L-ascorbate contacts are provided by Lys68 and Asp79. The region spanning 70-148 (SLTVPDRLGD…AIEEKYPEPS (79 aa)) is the GST N-terminal domain. The Nucleophile role is filled by Cys80. Glutathione contacts are provided by Lys107, Val120, Ser133, His219, and Trp266. The GST C-terminal domain occupies 126–272 (EEQWVADSDV…IAGWRPKVMG (147 aa)). An L-ascorbate-binding site is contributed by Lys269.

This sequence belongs to the GST superfamily. DHAR family. As to quaternary structure, monomer.

It localises to the plastid. It is found in the chloroplast. The catalysed reaction is RX + glutathione = an S-substituted glutathione + a halide anion + H(+). The enzyme catalyses L-dehydroascorbate + 2 glutathione = glutathione disulfide + L-ascorbate. Involved in ascorbate homeostasis. Maintains redox pools of ascorbate by recycling dihydroascorbate (DHA) to ascorbate. Involved in scavenging reactive oxygen species (ROS) under oxidative stresses. This is Probable glutathione S-transferase DHAR2, chloroplastic from Oryza sativa subsp. japonica (Rice).